Reading from the N-terminus, the 347-residue chain is Holliday junction branch migration complex subunit RuvB (347 aa).

Residues 1 to 182 (MSAQNPVLTP…FGIPVRLSFY (182 aa)) form a large ATPase domain (RuvB-L) region. Residues Leu-21, Arg-22, Gly-63, Lys-66, Thr-67, Thr-68, 129-131 (EDF), Arg-172, Tyr-182, and Arg-219 each bind ATP. A Mg(2+)-binding site is contributed by Thr-67. Positions 183 to 253 (TVEELELIVR…IADEALTRLL (71 aa)) are small ATPAse domain (RuvB-S). The tract at residues 256–347 (NMGLDQLDTR…QFRLTLEDDD (92 aa)) is head domain (RuvB-H). Positions 292, 311, and 316 each coordinate DNA.

The protein belongs to the RuvB family. As to quaternary structure, homohexamer. Forms an RuvA(8)-RuvB(12)-Holliday junction (HJ) complex. HJ DNA is sandwiched between 2 RuvA tetramers; dsDNA enters through RuvA and exits via RuvB. An RuvB hexamer assembles on each DNA strand where it exits the tetramer. Each RuvB hexamer is contacted by two RuvA subunits (via domain III) on 2 adjacent RuvB subunits; this complex drives branch migration. In the full resolvosome a probable DNA-RuvA(4)-RuvB(12)-RuvC(2) complex forms which resolves the HJ.

It localises to the cytoplasm. The enzyme catalyses ATP + H2O = ADP + phosphate + H(+). Its function is as follows. The RuvA-RuvB-RuvC complex processes Holliday junction (HJ) DNA during genetic recombination and DNA repair, while the RuvA-RuvB complex plays an important role in the rescue of blocked DNA replication forks via replication fork reversal (RFR). RuvA specifically binds to HJ cruciform DNA, conferring on it an open structure. The RuvB hexamer acts as an ATP-dependent pump, pulling dsDNA into and through the RuvAB complex. RuvB forms 2 homohexamers on either side of HJ DNA bound by 1 or 2 RuvA tetramers; 4 subunits per hexamer contact DNA at a time. Coordinated motions by a converter formed by DNA-disengaged RuvB subunits stimulates ATP hydrolysis and nucleotide exchange. Immobilization of the converter enables RuvB to convert the ATP-contained energy into a lever motion, pulling 2 nucleotides of DNA out of the RuvA tetramer per ATP hydrolyzed, thus driving DNA branch migration. The RuvB motors rotate together with the DNA substrate, which together with the progressing nucleotide cycle form the mechanistic basis for DNA recombination by continuous HJ branch migration. Branch migration allows RuvC to scan DNA until it finds its consensus sequence, where it cleaves and resolves cruciform DNA. This Allorhizobium ampelinum (strain ATCC BAA-846 / DSM 112012 / S4) (Agrobacterium vitis (strain S4)) protein is Holliday junction branch migration complex subunit RuvB.